The following is a 259-amino-acid chain: MTFPNINPVIFSIGPLAISWYSLSYVIGILLGWFYANKIIEKFKPQITKKNLEDFITYAVIGIIVGGRLGFVLLYNPSRYFSNPIDILKTYEGGMSFHGGALGGIIAAYLFCRKYKINFLSLTDIIAPVVPIGLFLGRIANFINGELYGRITNASFGMIFPNSDLMPRHPSQLYEAFFEGLVLFSILAYATFKHKTLKKCGLNSGIFFTFYGLFRITIEIFREPDIQIGFILDSLTMGQILSVPMLLLGSYLICQSNPK.

4 helical membrane-spanning segments follow: residues 16-36 (LAIS…WFYA), 55-75 (FITY…VLLY), 92-112 (EGGM…YLFC), and 117-137 (INFL…LFLG). R138 lines the a 1,2-diacyl-sn-glycero-3-phospho-(1'-sn-glycerol) pocket. 3 consecutive transmembrane segments (helical) span residues 172–192 (QLYE…YATF), 201–221 (GLNS…IEIF), and 228–248 (IGFI…MLLL).

The protein belongs to the Lgt family.

Its subcellular location is the cell inner membrane. It catalyses the reaction L-cysteinyl-[prolipoprotein] + a 1,2-diacyl-sn-glycero-3-phospho-(1'-sn-glycerol) = an S-1,2-diacyl-sn-glyceryl-L-cysteinyl-[prolipoprotein] + sn-glycerol 1-phosphate + H(+). Its pathway is protein modification; lipoprotein biosynthesis (diacylglyceryl transfer). In terms of biological role, catalyzes the transfer of the diacylglyceryl group from phosphatidylglycerol to the sulfhydryl group of the N-terminal cysteine of a prolipoprotein, the first step in the formation of mature lipoproteins. In Rickettsia rickettsii (strain Iowa), this protein is Phosphatidylglycerol--prolipoprotein diacylglyceryl transferase.